The chain runs to 444 residues: Cholecystokinin receptor type A (444 aa).

Over 1-56 (MSHSPARQHLVESSRMDVVDSLLMNGSNITPPCELGLENETLFCLDQPQPSKEWQS) the chain is Extracellular. N-linked (GlcNAc...) asparagine glycans are attached at residues N25 and N39. A disulfide bridge connects residues C33 and C44. A helical transmembrane segment spans residues 57–82 (ALQILLYSIIFLLSVLGNTLVITVLI). Residues 83-92 (RNKRMRTVTN) lie on the Cytoplasmic side of the membrane. The helical transmembrane segment at 93 to 119 (IFLLSLAVSDLMLCLFCMPFNLIPNLL) threads the bilayer. Residues 120-130 (KDFIFGSAVCK) are Extracellular-facing. Cysteines 129 and 211 form a disulfide. Residues 131–152 (TTTYFMGTSVSVSTFNLVAISL) traverse the membrane as a helical segment. Residues 153-172 (ERYGAICRPLQSRVWQTKSH) lie on the Cytoplasmic side of the membrane. The helical transmembrane segment at 173–193 (ALKVIAATWCLSFTIMTPYPI) threads the bilayer. Over 194-225 (YSNLVPFTKNNNQTANMCRFLLPSDAMQQSWQ) the chain is Extracellular. N205 is a glycosylation site (N-linked (GlcNAc...) asparagine). The chain crosses the membrane as a helical span at residues 226–249 (TFLLLILFLLPGIVMVVAYGLISL). Residues 250-329 (ELYQGIKFDA…NLIAKKRVIR (80 aa)) are Cytoplasmic-facing. Residues 263–288 (KSAKEKKPSTGSSTRYEDSDGCYLQK) form a disordered region. Residues 330 to 350 (MLIVIVVLFFLCWMPIFSANA) traverse the membrane as a helical segment. Over 351-365 (WRAYDTVSAEKHLSG) the chain is Extracellular. The chain crosses the membrane as a helical span at residues 366 to 389 (TPISFILLLSYTSSCVNPIIYCFM). The Cytoplasmic portion of the chain corresponds to 390 to 444 (NKRFRLGFMATFPCCPNPGPPGVRGEVGEEEDGRTIRALLSRYSYSHMSTSAPPP). A lipid anchor (S-palmitoyl cysteine) is attached at C403.

Belongs to the G-protein coupled receptor 1 family. In terms of tissue distribution, pancreas and brain. Also expressed in the gastrointestinal system and vagus nerve.

Its subcellular location is the cell membrane. In terms of biological role, receptor for cholecystokinin. Mediates pancreatic growth and enzyme secretion, smooth muscle contraction of the gall bladder and stomach. Has a 1000-fold higher affinity for CCK rather than for gastrin. It modulates feeding and dopamine-induced behavior in the central and peripheral nervous system. This receptor mediates its action by association with G proteins that activate a phosphatidylinositol-calcium second messenger system. This Rattus norvegicus (Rat) protein is Cholecystokinin receptor type A (Cckar).